A 435-amino-acid chain; its full sequence is WD repeat domain phosphoinositide-interacting protein 2 (435 aa).

Residues 182–222 form a WD 1 repeat; it reads AHDSPLAALAFDASGTKLATASEKGTVIRVFSIPEGQKLFE. The L/FRRG motif signature appears at 223-226; the sequence is FRRG. 2 WD repeats span residues 228-267 and 311-349; these read KRCV…EKPP and GHKN…GGEC. The disordered stretch occupies residues 386–435; the sequence is VTKTYPPPSPTRHAYADDLGAVGGASEEDEMGNLRLDEDNENPPMILQTE.

Belongs to the WD repeat PROPPIN family.

Its subcellular location is the preautophagosomal structure membrane. Functionally, component of the autophagy machinery that controls the major intracellular degradation process by which cytoplasmic materials are packaged into autophagosomes and delivered to lysosomes for degradation. Involved in an early step of the formation of preautophagosomal structures. This is WD repeat domain phosphoinositide-interacting protein 2 (wipi2) from Xenopus laevis (African clawed frog).